The following is a 501-amino-acid chain: MLPPKIFFEKVKEIMWPIERKELKLFIPMALMMLCILFNFGALRSIKDSLVVPSMGAEIISFLKLWLVLPSCVIFTVLYVKLSNNLNFEYIFYIIVGSFLLFFLLFAYIIYPNQDIYHPNDEMINKLIASYPNFKWFIKIGSQWSYALMYIFAELWSAVVINLMFWQFANHIFDTSKAKRFYPVLGMVGNIGLIIAGSVLVFFSSGQDVIDSELLPDSFNSSAGNAIMLQPIMSIIVTAGIIAMLLFRIINRFILTDSINVLDAKKVTAKMKTKLSVIESIKLVIHSKYIGRIALLIICYGLLINIVEGPWKAKIKELHPNTIDYVNFMGRFNIWMGISCVTFMIIGSNILRRLGWLISALLTPIMLSITGLMFFIFIIFIEEIGECFGDFNLLYAAIIVGAIQNILSKSSKYSLFDSTKEMAYIPLSLELRTKGKAAVEVIGTKFGKSLGAFIQSLIFIIIPTATFDSIIIYLLITFIVMMSLWIWNVIKLNKEYVELCK.

Helical transmembrane passes span 23 to 43 (LKLFIPMALMMLCILFNFGAL), 59 to 79 (IISFLKLWLVLPSCVIFTVLY), 90 to 110 (YIFYIIVGSFLLFFLLFAYII), 146 to 166 (YALMYIFAELWSAVVINLMFW), 183 to 203 (PVLGMVGNIGLIIAGSVLVFF), 227 to 247 (IMLQPIMSIIVTAGIIAMLLF), 293 to 313 (IALLIICYGLLINIVEGPWKA), 326 to 346 (VNFMGRFNIWMGISCVTFMII), 361 to 381 (LLTPIMLSITGLMFFIFIIFI), 387 to 407 (CFGDFNLLYAAIIVGAIQNIL), 446 to 466 (FGKSLGAFIQSLIFIIIPTAT), and 470 to 490 (IIIYLLITFIVMMSLWIWNVI).

It belongs to the ADP/ATP translocase tlc family.

The protein localises to the cell membrane. Provides the rickettsial cell with host ATP in exchange for rickettsial ADP. This is an obligate exchange system. This energy acquiring activity is an important component of rickettsial parasitism. In Rickettsia conorii (strain ATCC VR-613 / Malish 7), this protein is ADP,ATP carrier protein 3 (tlcC).